A 694-amino-acid chain; its full sequence is Zinc finger BED domain-containing protein 5 (694 aa).

Residues 109-165 form a BED-type zinc finger; it reads RKYDESYLSFGFTYFGNRDAPHAQCVLCKKILSNSSLAPSKLRRHLETKHAAYKDKD. Positions 133, 136, 153, and 158 each coordinate Zn(2+).

In Canis lupus familiaris (Dog), this protein is Zinc finger BED domain-containing protein 5 (ZBED5).